Consider the following 39-residue polypeptide: Cytochrome b559 subunit beta (39 aa).

A helical transmembrane segment spans residues tryptophan 14–serine 30. A heme-binding site is contributed by histidine 18.

It belongs to the PsbE/PsbF family. As to quaternary structure, heterodimer of an alpha subunit and a beta subunit. PSII is composed of 1 copy each of membrane proteins PsbA, PsbB, PsbC, PsbD, PsbE, PsbF, PsbH, PsbI, PsbJ, PsbK, PsbL, PsbM, PsbT, PsbX, PsbY, PsbZ, Psb30/Ycf12, at least 3 peripheral proteins of the oxygen-evolving complex and a large number of cofactors. It forms dimeric complexes. Requires heme b as cofactor.

It localises to the plastid. Its subcellular location is the chloroplast thylakoid membrane. Functionally, this b-type cytochrome is tightly associated with the reaction center of photosystem II (PSII). PSII is a light-driven water:plastoquinone oxidoreductase that uses light energy to abstract electrons from H(2)O, generating O(2) and a proton gradient subsequently used for ATP formation. It consists of a core antenna complex that captures photons, and an electron transfer chain that converts photonic excitation into a charge separation. In Nicotiana glutinosa (Tobacco), this protein is Cytochrome b559 subunit beta.